Here is a 382-residue protein sequence, read N- to C-terminus: Galactokinase (382 aa).

Position 34–37 (34–37) interacts with substrate; sequence EHTD. 124-130 is an ATP binding site; that stretch reads GAGLSSS. Mg(2+) is bound by residues serine 130 and glutamate 162. Residue aspartate 174 is the Proton acceptor of the active site. Tyrosine 223 is a substrate binding site.

It belongs to the GHMP kinase family. GalK subfamily.

It is found in the cytoplasm. It carries out the reaction alpha-D-galactose + ATP = alpha-D-galactose 1-phosphate + ADP + H(+). It participates in carbohydrate metabolism; galactose metabolism. Its function is as follows. Catalyzes the transfer of the gamma-phosphate of ATP to D-galactose to form alpha-D-galactose-1-phosphate (Gal-1-P). The polypeptide is Galactokinase (Salmonella paratyphi B (strain ATCC BAA-1250 / SPB7)).